Here is a 614-residue protein sequence, read N- to C-terminus: ATP-dependent zinc metalloprotease FtsH (614 aa).

The Cytoplasmic portion of the chain corresponds to 1-5; sequence MLPIR. A helical membrane pass occupies residues 6–26; it reads WFLALLAVFLAVAGLDLWFSQ. At 27 to 127 the chain is on the periplasmic side; sequence TGARPSSATG…AVSARERTAS (101 aa). The chain crosses the membrane as a helical span at residues 128 to 148; the sequence is IVHAIVHPLGLITLIVGILFV. Over 149–614 the chain is Cytoplasmic; it reads VQRYAGRFTA…AQHPPSALAG (466 aa). 214 to 221 is a binding site for ATP; it reads GPPGTGKT. His436 lines the Zn(2+) pocket. Glu437 is a catalytic residue. 2 residues coordinate Zn(2+): His440 and Asp513.

It in the central section; belongs to the AAA ATPase family. This sequence in the C-terminal section; belongs to the peptidase M41 family. Homohexamer. The cofactor is Zn(2+).

It localises to the cell inner membrane. Acts as a processive, ATP-dependent zinc metallopeptidase for both cytoplasmic and membrane proteins. Plays a role in the quality control of integral membrane proteins. This chain is ATP-dependent zinc metalloprotease FtsH, found in Opitutus terrae (strain DSM 11246 / JCM 15787 / PB90-1).